The sequence spans 480 residues: Cysteine--tRNA ligase (480 aa).

Residue Cys29 coordinates Zn(2+). A 'HIGH' region motif is present at residues 31 to 41 (PTVYGHAHLGH). Zn(2+) contacts are provided by Cys221, His246, and Glu250. The 'KMSKS' region signature appears at 278–282 (KMGKS). Lys281 is a binding site for ATP.

It belongs to the class-I aminoacyl-tRNA synthetase family. Monomer. Zn(2+) serves as cofactor.

It is found in the cytoplasm. It carries out the reaction tRNA(Cys) + L-cysteine + ATP = L-cysteinyl-tRNA(Cys) + AMP + diphosphate. This chain is Cysteine--tRNA ligase, found in Chlorobium chlorochromatii (strain CaD3).